We begin with the raw amino-acid sequence, 274 residues long: Proliferating cell nuclear antigen 1 (274 aa).

The DNA-binding element occupies 61–80 (RCDRERVLGVNIASLNKVFK).

It belongs to the PCNA family. As to quaternary structure, homotrimer. Interacts with ORC1 (via PIP-box motif); the interaction occurs during DNA replication in trophozoites. Interacts with ORC5; the interaction occurs during the trophozoite stage but not at the late schizont stage. Interacts with FEN1.

The protein localises to the nucleus. Its subcellular location is the chromosome. It localises to the cytoplasm. Auxiliary protein of DNA polymerase delta and is involved in the control of DNA replication by increasing the polymerase processibility during elongation of the leading strand. Involved in DNA damage response. The polypeptide is Proliferating cell nuclear antigen 1 (Plasmodium falciparum (isolate 3D7)).